Reading from the N-terminus, the 563-residue chain is MTTLLSFLTSLCSAAIHQAFPELEELTLDITPSTKEHFGHYQCNDAMKLARVLRKSPRAIAESIVAHIPPAPFSSIEIAGAGFINFTFSKEFLASQLQTFSKELANGFRAASPQKVIIDFSSPNIAKDMHVGHLRSTIIGDCLARCFSFVGHDVLRLNHIGDWGTAFGMLITYLQETSQEAIHQLEDLTALYKKAHARFAEDSEFKKRSQHNVVALQSGDAQALALWKQICSVSEKSFQTIYSILDVELHTRGESFYNPFLAEVVADLESKNLVTLSDGAKCVFHEAFSIPLMIQKSDGGYNYATTDVAAMRYRIQQDQADRILIVTDSGQSLHFQLLEATCLAAGYLPSKGIFSHVGFGLVLDTQGRKFKTRSGENIKLRELLDTAVEKAKESLKAHRPDISEEELAYQGPILGINAIKYADLSSHRINDYVFSFEKMLRFEGNTAMSLLYAYVRIQGIKRRMGLESLPQEEPLAIHEPAEEALALTLLRFPEILDLTLRELCPHFLTDYLYALTNKFNAFFRDCHIEGSDSQQERLYLCGLTERTLSTGMHLLGLKTLNHL.

The short motif at 123–133 (PNIAKDMHVGH) is the 'HIGH' region element.

It belongs to the class-I aminoacyl-tRNA synthetase family. In terms of assembly, monomer.

The protein localises to the cytoplasm. It catalyses the reaction tRNA(Arg) + L-arginine + ATP = L-arginyl-tRNA(Arg) + AMP + diphosphate. In Chlamydia trachomatis serovar A (strain ATCC VR-571B / DSM 19440 / HAR-13), this protein is Arginine--tRNA ligase.